The primary structure comprises 58 residues: Metallothionein (58 aa).

The tract at residues 1–29 (MPGPCCNDVCECAAGGCKTGCVCTSCRCS) is beta. A divalent metal cation-binding residues include C5, C6, C10, C12, C17, C21, C23, C26, C28, C31, C34, C38, C40, C46, C50, C54, C56, and C57. An alpha region spans residues 30–58 (PCDKCTSGCKCPSKEECAKTCSKPCECCP).

Functionally, metallothioneins have a high content of cysteine residues that bind various heavy metals. Class I MTS in crustacea are involved in the sequestration of elevated levels of heavy-metal ions. In Astacus astacus (Noble crayfish), this protein is Metallothionein.